Reading from the N-terminus, the 224-residue chain is Germin-like protein 8-10 (224 aa).

An N-terminal signal peptide occupies residues 1–22; that stretch reads MASPSICLLAALLALVSWQAIA. The cysteines at positions 32 and 47 are disulfide-linked. A Cupin type-1 domain is found at 62–212; that stretch reads AMLDTPRKTN…AFQVEKGTID (151 aa). N76 is a glycosylation site (N-linked (GlcNAc...) asparagine). Mn(2+) is bound by residues H109, H111, and E116. N135 is a glycosylation site (N-linked (GlcNAc...) asparagine). Residue H157 coordinates Mn(2+).

It belongs to the germin family. As to quaternary structure, oligomer (believed to be a pentamer but probably hexamer).

The protein localises to the secreted. It is found in the extracellular space. The protein resides in the apoplast. Functionally, plays a role in broad-spectrum disease resistance. Probably has no oxalate oxidase activity even if the active site is conserved. The chain is Germin-like protein 8-10 (GLP2) from Oryza sativa subsp. japonica (Rice).